The sequence spans 928 residues: Chitin synthase 2 (928 aa).

Disordered stretches follow at residues 1-45 (MAYN…EAYA) and 110-179 (AYYT…SPAP). Residues 17-28 (PSAQPQYDSRSP) are compositionally biased toward polar residues. Residues 130–140 (PSHDEPYRPDT) are compositionally biased toward basic and acidic residues. A run of 9 helical transmembrane segments spans residues 472–492 (SAFG…YVAL), 570–589 (WLNG…YQLW), 613–633 (LFAW…TASL), 644–664 (TVLG…CFIL), 678–698 (MMMV…SIFL), 723–743 (FFGL…ASFL), 753–773 (CFLQ…IYAF), 854–874 (VTAW…IAGF), and 893–913 (VILW…CWFL).

It belongs to the chitin synthase family. Class I subfamily.

Its subcellular location is the cell membrane. It catalyses the reaction [(1-&gt;4)-N-acetyl-beta-D-glucosaminyl](n) + UDP-N-acetyl-alpha-D-glucosamine = [(1-&gt;4)-N-acetyl-beta-D-glucosaminyl](n+1) + UDP + H(+). In terms of biological role, polymerizes chitin, a structural polymer of the cell wall and septum, by transferring the sugar moiety of UDP-GlcNAc to the non-reducing end of the growing chitin polymer. CHS2 plays a synergistic role to CHS1 in normal yeast cell reproductive growth, even if this role is less predominant than for CHS1. With CHS3, plays an important role in virulence. The sequence is that of Chitin synthase 2 from Exophiala dermatitidis (Black yeast-like fungus).